We begin with the raw amino-acid sequence, 259 residues long: Small ribosomal subunit protein mS23 (259 aa).

Residues 230–244 show a composition bias toward polar residues; it reads RAASFTGSALPSSEE. Residues 230–259 form a disordered region; it reads RAASFTGSALPSSEESAPVDEETEKVPQQV.

Belongs to the mitochondrion-specific ribosomal protein mS23 family. Component of the mitochondrial small ribosomal subunit.

Its subcellular location is the mitochondrion. This Aspergillus terreus (strain NIH 2624 / FGSC A1156) protein is Small ribosomal subunit protein mS23 (rsm25).